Consider the following 394-residue polypeptide: 1-deoxy-D-xylulose 5-phosphate reductoisomerase (394 aa).

Thr6, Gly7, Ser8, Ile9, Ala32, and Asn124 together coordinate NADPH. Lys125 serves as a coordination point for 1-deoxy-D-xylulose 5-phosphate. Glu126 is a binding site for NADPH. Asp148 serves as a coordination point for Mn(2+). Positions 149, 150, 174, and 197 each coordinate 1-deoxy-D-xylulose 5-phosphate. A Mn(2+)-binding site is contributed by Glu150. Gly203 is an NADPH binding site. Residues Ser210, Asn215, Lys216, and Glu219 each contribute to the 1-deoxy-D-xylulose 5-phosphate site. Position 219 (Glu219) interacts with Mn(2+).

It belongs to the DXR family. It depends on Mg(2+) as a cofactor. Mn(2+) is required as a cofactor.

The enzyme catalyses 2-C-methyl-D-erythritol 4-phosphate + NADP(+) = 1-deoxy-D-xylulose 5-phosphate + NADPH + H(+). Its pathway is isoprenoid biosynthesis; isopentenyl diphosphate biosynthesis via DXP pathway; isopentenyl diphosphate from 1-deoxy-D-xylulose 5-phosphate: step 1/6. In terms of biological role, catalyzes the NADPH-dependent rearrangement and reduction of 1-deoxy-D-xylulose-5-phosphate (DXP) to 2-C-methyl-D-erythritol 4-phosphate (MEP). This chain is 1-deoxy-D-xylulose 5-phosphate reductoisomerase, found in Streptomyces avermitilis (strain ATCC 31267 / DSM 46492 / JCM 5070 / NBRC 14893 / NCIMB 12804 / NRRL 8165 / MA-4680).